A 417-amino-acid polypeptide reads, in one-letter code: Phosphoglycerate kinase 1 (417 aa).

An N-acetylserine modification is found at Ser2. Residues Ser2 and Ser4 each carry the phosphoserine modification. The residue at position 6 (Lys6) is an N6-succinyllysine. Lys11 is subject to N6-acetyllysine. Positions 23, 24, 25, 26, 38, 39, 62, 63, 65, and 66 each coordinate (2R)-3-phosphoglycerate. The mitochondrial targeting region exposed following cis-trans isomerization by PIN1 and recognized by the TOM complex for mitochondrial translocation of the protein stretch occupies residues 38–43 (QRIKAA). Lys75 carries the post-translational modification N6-acetyllysine. Tyr76 is modified (phosphotyrosine). N6-acetyllysine occurs at positions 86 and 91. Lys97 carries the post-translational modification N6-(2-hydroxyisobutyryl)lysine; alternate. Lys97 bears the N6-acetyllysine; alternate mark. (2R)-3-phosphoglycerate-binding residues include Leu122 and Arg123. N6-acetyllysine; alternate is present on Lys131. Residue Lys131 is modified to N6-malonyllysine; alternate. Lys146 is subject to N6-acetyllysine. Positions 170 and 171 each coordinate (2R)-3-phosphoglycerate. The residue at position 191 (Lys191) is an N6-succinyllysine. Tyr196 bears the Phosphotyrosine mark. An N6-acetyllysine modification is found at Lys199. Ser203 bears the Phosphoserine mark. ADP is bound at residue Gly214. Gly214 serves as a coordination point for CDP. AMP is bound by residues Ala215 and Lys216. Position 215 (Ala215) interacts with ATP. Ala215 lines the Mg(2+) pocket. Lys216 carries the post-translational modification N6-(2-hydroxyisobutyryl)lysine. Mg(2+) is bound by residues Ala218 and Asp219. Asp219 lines the CDP pocket. Lys220 serves as a coordination point for AMP. Residue Lys220 participates in ATP binding. An N6-(2-hydroxyisobutyryl)lysine modification is found at Lys220. Gly238 contacts ADP. Gly238 is a CDP binding site. Gly239 is an AMP binding site. An ATP-binding site is contributed by Gly239. N6-acetyllysine is present on residues Lys267 and Lys291. Gly313 contributes to the AMP binding site. Gly313 serves as a coordination point for ATP. Lys323 carries the N6-(2-hydroxyisobutyryl)lysine modification. Positions 338, 340, and 343 each coordinate CDP. Phe343 serves as a coordination point for ADP. Glu344 provides a ligand contact to AMP. Residues Glu344, Asp375, and Thr376 each coordinate ATP. Asp375 lines the Mg(2+) pocket.

Belongs to the phosphoglycerate kinase family. In terms of assembly, monomer. Interacts with kinase MAPK1/ERK2; the interaction is direct, occurs under hypoxic conditions, and promotes its interaction with PIN1. Interacts with peptidyl-prolyl cis-trans isomerase PIN1; the interaction is direct, occurs under hypoxic conditions, and targets the protein to the mitochondrion by promoting interactions with the TOM complex. Interacts with mitochondrial circRNA mcPGK1 (via its 2nd stem-loop); the interaction is direct and targets the protein to the mitochondrion by promoting interactions with the TOM complex. Interacts with pyruvate dehydrogenase kinase PDK1; the interaction is direct, occurs under hypoxic conditions and leads to PDK1-mediated inhibition of pyruvate dehydrogenase complex activity. The cofactor is Mg(2+). Phosphorylated at Ser-203 by MAPK1/ERK2 under hypoxic conditions, which promotes its mitochondrial targeting.

The protein resides in the cytoplasm. It localises to the cytosol. Its subcellular location is the mitochondrion matrix. The catalysed reaction is (2R)-3-phosphoglycerate + ATP = (2R)-3-phospho-glyceroyl phosphate + ADP. It catalyses the reaction L-seryl-[protein] + ATP = O-phospho-L-seryl-[protein] + ADP + H(+). It functions in the pathway carbohydrate degradation; glycolysis; pyruvate from D-glyceraldehyde 3-phosphate: step 2/5. In terms of biological role, catalyzes one of the two ATP producing reactions in the glycolytic pathway via the reversible conversion of 1,3-diphosphoglycerate to 3-phosphoglycerate. Both L- and D- forms of purine and pyrimidine nucleotides can be used as substrates, but the activity is much lower on pyrimidines. In addition to its role as a glycolytic enzyme, it seems that PGK-1 acts as a polymerase alpha cofactor protein (primer recognition protein). Acts as a protein kinase when localized to the mitochondrion where it phosphorylates pyruvate dehydrogenase kinase PDK1 to inhibit pyruvate dehydrogenase complex activity and suppress the formation of acetyl-coenzyme A from pyruvate, and consequently inhibit oxidative phosphorylation and promote glycolysis. May play a role in sperm motility. The polypeptide is Phosphoglycerate kinase 1 (PGK1) (Notamacropus eugenii (Tammar wallaby)).